The sequence spans 536 residues: Light-independent protochlorophyllide reductase subunit B (536 aa).

[4Fe-4S] cluster is bound at residue Asp-36. The active-site Proton donor is Asp-292. Residue 427–428 coordinates substrate; that stretch reads GL. Residues 448 to 469 are compositionally biased toward low complexity; the sequence is SHLGHLGGHQSQTEQQQSQAAT. Positions 448-489 are disordered; sequence SHLGHLGGHQSQTEQQQSQAATNPSTQSNADSSSEESPLWTP. A compositionally biased stretch (polar residues) spans 470–483; the sequence is NPSTQSNADSSSEE.

The protein belongs to the ChlB/BchB/BchZ family. In terms of assembly, protochlorophyllide reductase is composed of three subunits; ChlL, ChlN and ChlB. Forms a heterotetramer of two ChlB and two ChlN subunits. It depends on [4Fe-4S] cluster as a cofactor.

It catalyses the reaction chlorophyllide a + oxidized 2[4Fe-4S]-[ferredoxin] + 2 ADP + 2 phosphate = protochlorophyllide a + reduced 2[4Fe-4S]-[ferredoxin] + 2 ATP + 2 H2O. It functions in the pathway porphyrin-containing compound metabolism; chlorophyll biosynthesis (light-independent). Functionally, component of the dark-operative protochlorophyllide reductase (DPOR) that uses Mg-ATP and reduced ferredoxin to reduce ring D of protochlorophyllide (Pchlide) to form chlorophyllide a (Chlide). This reaction is light-independent. The NB-protein (ChlN-ChlB) is the catalytic component of the complex. The chain is Light-independent protochlorophyllide reductase subunit B from Prochlorococcus marinus (strain MIT 9313).